A 560-amino-acid chain; its full sequence is N-acetylglucosamine-6-sulfatase (560 aa).

The interval 1-25 (MRLLSLAPDRPRRGGPRHLTSGSPA) is disordered. The signal sequence occupies residues 1–48 (MRLLSLAPDRPRRGGPRHLTSGSPALPPPPPLLLLLLLLGGCLGVSGA). Residues D63, D64, and C99 each contribute to the Ca(2+) site. The active-site Nucleophile is the C99. C99 bears the 3-oxoalanine (Cys) mark. N-linked (GlcNAc...) asparagine glycosylation is found at N119, N125, N191, N206, N218, N287, and N325. Residues D334 and N335 each coordinate Ca(2+). 6 N-linked (GlcNAc...) asparagine glycosylation sites follow: N370, N395, N413, N430, N457, and N488. S549 is subject to Phosphoserine.

It belongs to the sulfatase family. The cofactor is Ca(2+). Post-translationally, the conversion to 3-oxoalanine (also known as C-formylglycine, FGly), of a serine or cysteine residue in prokaryotes and of a cysteine residue in eukaryotes, is critical for catalytic activity.

The protein localises to the lysosome. The catalysed reaction is Hydrolysis of the 6-sulfate groups of the N-acetyl-D-glucosamine 6-sulfate units of heparan sulfate and keratan sulfate.. In terms of biological role, hydrolyzes 6-sulfate groups in N-acetyl-d-glucosaminide units of heparin sulfate and keratan sulfate. This Bos taurus (Bovine) protein is N-acetylglucosamine-6-sulfatase (GNS).